Reading from the N-terminus, the 341-residue chain is Enduracididine beta-hydroxylase (341 aa).

Fe cation contacts are provided by His146 and Glu148. Positions 203 to 223 (HRIHGKAPGDESARESALRER) are disordered. His300 is a binding site for Fe cation.

Belongs to the clavaminate synthase family. Requires Fe(2+) as cofactor.

It catalyses the reaction L-enduracididine + 2-oxoglutarate + O2 = (3S)-3-hydroxy-L-enduracididine + succinate + CO2. It functions in the pathway antibiotic biosynthesis. In terms of biological role, hydroxylates the beta carbon of free L-enduracididine to produce (3S)-3-hydroxy-L-enduracididine in biosynthesis of the nonproteinogenic amino acid beta-hydroxyenduracididine, a component of antibiotic mannopeptimycin. In Streptomyces hygroscopicus, this protein is Enduracididine beta-hydroxylase (mppO).